A 645-amino-acid chain; its full sequence is Threonine--tRNA ligase (645 aa).

Positions Met1–Thr61 constitute a TGS domain. Residues Asp242–Pro541 are catalytic. Cys337, His388, and His518 together coordinate Zn(2+).

Belongs to the class-II aminoacyl-tRNA synthetase family. As to quaternary structure, homodimer. Requires Zn(2+) as cofactor.

The protein resides in the cytoplasm. It carries out the reaction tRNA(Thr) + L-threonine + ATP = L-threonyl-tRNA(Thr) + AMP + diphosphate + H(+). Its function is as follows. Catalyzes the attachment of threonine to tRNA(Thr) in a two-step reaction: L-threonine is first activated by ATP to form Thr-AMP and then transferred to the acceptor end of tRNA(Thr). Also edits incorrectly charged L-seryl-tRNA(Thr). The polypeptide is Threonine--tRNA ligase (Cytophaga hutchinsonii (strain ATCC 33406 / DSM 1761 / CIP 103989 / NBRC 15051 / NCIMB 9469 / D465)).